The primary structure comprises 117 residues: DNA-directed RNA polymerase II subunit RPB11 (117 aa).

The protein belongs to the archaeal Rpo11/eukaryotic RPB11/RPC19 RNA polymerase subunit family. As to quaternary structure, component of the RNA polymerase II (Pol II) complex consisting of 12 subunits.

The protein localises to the nucleus. Functionally, DNA-dependent RNA polymerase catalyzes the transcription of DNA into RNA using the four ribonucleoside triphosphates as substrates. Component of RNA polymerase II which synthesizes mRNA precursors and many functional non-coding RNAs. Pol II is the central component of the basal RNA polymerase II transcription machinery. It is composed of mobile elements that move relative to each other. RPB11 is part of the core element with the central large cleft. This Drosophila melanogaster (Fruit fly) protein is DNA-directed RNA polymerase II subunit RPB11.